The following is a 370-amino-acid chain: 3 beta-hydroxysteroid dehydrogenase/Delta 5--&gt;4-isomerase (370 aa).

Y158 acts as the Proton acceptor in catalysis. K162 contributes to the NAD(+) binding site.

It belongs to the 3-beta-HSD family. Monomer.

The protein localises to the cytoplasm. It carries out the reaction a 3beta-hydroxy-Delta(5)-steroid + NAD(+) = a 3-oxo-Delta(5)-steroid + NADH + H(+). The enzyme catalyses cholesterol + NAD(+) = cholest-5-en-3-one + NADH + H(+). It catalyses the reaction pregnenolone + NAD(+) = pregn-5-ene-3,20-dione + NADH + H(+). The catalysed reaction is 3beta-hydroxyandrost-5-en-17-one + NAD(+) = androst-5-ene-3,17-dione + NADH + H(+). It carries out the reaction a 3-oxo-Delta(5)-steroid = a 3-oxo-Delta(4)-steroid. The enzyme catalyses cholest-5-en-3-one = cholest-4-en-3-one. It catalyses the reaction pregn-5-ene-3,20-dione = progesterone. The catalysed reaction is androst-5-ene-3,17-dione = androst-4-ene-3,17-dione. The protein operates within lipid metabolism; steroid biosynthesis. In terms of biological role, 3-beta-HSD is a bifunctional enzyme, that catalyzes the oxidation and isomerization of cholesterol, pregnenolone, and dehydroepiandrosterone (DHEA) into cholest-4-en-3-one, progesterone, and androsterone, respectively. The protein is 3 beta-hydroxysteroid dehydrogenase/Delta 5--&gt;4-isomerase of Mycobacterium tuberculosis (strain CDC 1551 / Oshkosh).